A 488-amino-acid polypeptide reads, in one-letter code: MELLREAKPYTKDKLKTNLIEWFHWLLREAELYDVRYPVKGAYVWRPYGMKLRRNVENLIRRIHDETGHEEVLFPVFIPYEFFSKESQHIRGFEKEVFWVSKGGEGGERLILRPTSETAIMPMVKLWIQDYKDLPLRLYQIVSVFRAETKMTHPMIRLREISMFKEAHTVHATREDAERQIREAVEIYKRIFDEMCLAYMINKRPNWDKFAGAEYTIAFDTILPDGRTLQIGTVHYLGVNFTKVFEVTYLDIDGTRKLAHTTSYGISERSIAAMLITHGDDGGTTLPPKLAPIQVVIVPIFYGEEEMPTVMKFVDEVYRMLRDVGIRIHIDDRRDKTPGWKFYYWELKGVPLRIEVGRRDIEKRQVVVTRRDTLEKYAVSLGELVDAVKQLMSVVEDNLRKRAWEDLRNRLVKVEKVEDAKNAIREGKVVEVPWSGDDECGVKLQELVGADALGIPMDTDPSIGGFDMRDLACKEKRAEFWLRLSERY.

This sequence belongs to the class-II aminoacyl-tRNA synthetase family. ProS type 3 subfamily. In terms of assembly, homodimer.

The protein resides in the cytoplasm. The enzyme catalyses tRNA(Pro) + L-proline + ATP = L-prolyl-tRNA(Pro) + AMP + diphosphate. Functionally, catalyzes the attachment of proline to tRNA(Pro) in a two-step reaction: proline is first activated by ATP to form Pro-AMP and then transferred to the acceptor end of tRNA(Pro). This chain is Proline--tRNA ligase, found in Pyrobaculum islandicum (strain DSM 4184 / JCM 9189 / GEO3).